Reading from the N-terminus, the 359-residue chain is DNA polymerase IV (359 aa).

A UmuC domain is found at isoleucine 7–glycine 188. Mg(2+) contacts are provided by aspartate 11 and aspartate 106. The active site involves glutamate 107.

Belongs to the DNA polymerase type-Y family. In terms of assembly, monomer. Mg(2+) serves as cofactor.

Its subcellular location is the cytoplasm. It catalyses the reaction DNA(n) + a 2'-deoxyribonucleoside 5'-triphosphate = DNA(n+1) + diphosphate. Poorly processive, error-prone DNA polymerase involved in untargeted mutagenesis. Copies undamaged DNA at stalled replication forks, which arise in vivo from mismatched or misaligned primer ends. These misaligned primers can be extended by PolIV. Exhibits no 3'-5' exonuclease (proofreading) activity. May be involved in translesional synthesis, in conjunction with the beta clamp from PolIII. This chain is DNA polymerase IV, found in Clostridium perfringens (strain 13 / Type A).